The sequence spans 423 residues: Deoxyguanosinetriphosphate triphosphohydrolase-like protein (423 aa).

Residues 66-216 form the HD domain; it reads RLTHSLEVAQ…MDFSDDIAYS (151 aa).

The protein belongs to the dGTPase family. Type 2 subfamily.

The chain is Deoxyguanosinetriphosphate triphosphohydrolase-like protein from Corynebacterium diphtheriae (strain ATCC 700971 / NCTC 13129 / Biotype gravis).